We begin with the raw amino-acid sequence, 269 residues long: Formamidopyrimidine-DNA glycosylase (269 aa).

Catalysis depends on proline 2, which acts as the Schiff-base intermediate with DNA. Residue glutamate 3 is the Proton donor of the active site. The Proton donor; for beta-elimination activity role is filled by lysine 57. DNA is bound by residues histidine 90, arginine 109, and lysine 150. An FPG-type zinc finger spans residues 235–269 (QVYGRKGEPCRVCGTPIVATKHAQRATFYCRQCQK). Arginine 259 (proton donor; for delta-elimination activity) is an active-site residue.

The protein belongs to the FPG family. Monomer. Zn(2+) is required as a cofactor.

It carries out the reaction Hydrolysis of DNA containing ring-opened 7-methylguanine residues, releasing 2,6-diamino-4-hydroxy-5-(N-methyl)formamidopyrimidine.. The catalysed reaction is 2'-deoxyribonucleotide-(2'-deoxyribose 5'-phosphate)-2'-deoxyribonucleotide-DNA = a 3'-end 2'-deoxyribonucleotide-(2,3-dehydro-2,3-deoxyribose 5'-phosphate)-DNA + a 5'-end 5'-phospho-2'-deoxyribonucleoside-DNA + H(+). Functionally, involved in base excision repair of DNA damaged by oxidation or by mutagenic agents. Acts as a DNA glycosylase that recognizes and removes damaged bases. Has a preference for oxidized purines, such as 7,8-dihydro-8-oxoguanine (8-oxoG). Has AP (apurinic/apyrimidinic) lyase activity and introduces nicks in the DNA strand. Cleaves the DNA backbone by beta-delta elimination to generate a single-strand break at the site of the removed base with both 3'- and 5'-phosphates. The sequence is that of Formamidopyrimidine-DNA glycosylase from Escherichia coli O157:H7.